A 454-amino-acid chain; its full sequence is tRNA modification GTPase MnmE (454 aa).

Arg-23, Glu-80, and Lys-120 together coordinate (6S)-5-formyl-5,6,7,8-tetrahydrofolate. The region spanning 216-377 (GMKVVIAGRP…LRNHLKQSMG (162 aa)) is the TrmE-type G domain. Position 226 (Asn-226) interacts with K(+). GTP is bound by residues 226-231 (NAGKSS), 245-251 (TDIAGTT), 270-273 (DTAG), and 335-338 (NKAD). Ser-230 serves as a coordination point for Mg(2+). 3 residues coordinate K(+): Thr-245, Ile-247, and Thr-250. Thr-251 contacts Mg(2+). Lys-454 contacts (6S)-5-formyl-5,6,7,8-tetrahydrofolate.

The protein belongs to the TRAFAC class TrmE-Era-EngA-EngB-Septin-like GTPase superfamily. TrmE GTPase family. Homodimer. Heterotetramer of two MnmE and two MnmG subunits. It depends on K(+) as a cofactor.

The protein resides in the cytoplasm. Its function is as follows. Exhibits a very high intrinsic GTPase hydrolysis rate. Involved in the addition of a carboxymethylaminomethyl (cmnm) group at the wobble position (U34) of certain tRNAs, forming tRNA-cmnm(5)s(2)U34. The sequence is that of tRNA modification GTPase MnmE from Escherichia coli O157:H7.